The sequence spans 829 residues: Ent-cassa-12,15-diene synthase (829 aa).

The disordered stretch occupies residues 1 to 50 (MMLLGSPSSGGYGGKFAGASPAGGTTTMAPSAKQPSSRAPPPGITGGRND). Polar residues predominate over residues 23-37 (GGTTTMAPSAKQPSS). Mg(2+)-binding residues include Asp-576, Asp-580, Asn-720, and Glu-728. Positions 576–580 (DDLFD) match the DDXXD motif motif.

This sequence belongs to the terpene synthase family. Requires Mg(2+) as cofactor. Expressed in roots and stems.

The catalysed reaction is ent-copalyl diphosphate = ent-cassa-12,15-diene + diphosphate. Involved in phytocassane phytoalexins biosynthesis. Catalyzes the conversion of ent-copalyl diphosphate to the phytoalexin precursor ent-cassa-12,15-diene. This chain is Ent-cassa-12,15-diene synthase (KSL7), found in Oryza sativa subsp. japonica (Rice).